A 1778-amino-acid polypeptide reads, in one-letter code: Protein TIC 214 (1778 aa).

Helical transmembrane passes span 18–38 (IINS…FSIG), 67–87 (FIAG…HLAL), 90–110 (PHTI…WNNN), 132–152 (VFLN…SSML), 175–195 (VGWL…LVWI), and 226–246 (IFSI…PSPI). The interval 1498 to 1520 (GQGELESDNEKKRNPESALSNQE) is disordered.

Belongs to the TIC214 family. Part of the Tic complex.

It localises to the plastid. It is found in the chloroplast inner membrane. In terms of biological role, involved in protein precursor import into chloroplasts. May be part of an intermediate translocation complex acting as a protein-conducting channel at the inner envelope. The chain is Protein TIC 214 from Arabis hirsuta (Hairy rock-cress).